The following is a 72-amino-acid chain: Translation initiation factor IF-1 (72 aa).

In terms of domain architecture, S1-like spans 1–72; sequence MAKEDVIEMQ…SKGRIVFRAR (72 aa).

It belongs to the IF-1 family. As to quaternary structure, component of the 30S ribosomal translation pre-initiation complex which assembles on the 30S ribosome in the order IF-2 and IF-3, IF-1 and N-formylmethionyl-tRNA(fMet); mRNA recruitment can occur at any time during PIC assembly.

Its subcellular location is the cytoplasm. In terms of biological role, one of the essential components for the initiation of protein synthesis. Stabilizes the binding of IF-2 and IF-3 on the 30S subunit to which N-formylmethionyl-tRNA(fMet) subsequently binds. Helps modulate mRNA selection, yielding the 30S pre-initiation complex (PIC). Upon addition of the 50S ribosomal subunit IF-1, IF-2 and IF-3 are released leaving the mature 70S translation initiation complex. The chain is Translation initiation factor IF-1 from Photobacterium profundum (strain SS9).